The sequence spans 288 residues: ATP synthase gamma chain (288 aa).

Belongs to the ATPase gamma chain family. As to quaternary structure, F-type ATPases have 2 components, CF(1) - the catalytic core - and CF(0) - the membrane proton channel. CF(1) has five subunits: alpha(3), beta(3), gamma(1), delta(1), epsilon(1). CF(0) has three main subunits: a, b and c.

It is found in the cell inner membrane. Its function is as follows. Produces ATP from ADP in the presence of a proton gradient across the membrane. The gamma chain is believed to be important in regulating ATPase activity and the flow of protons through the CF(0) complex. The sequence is that of ATP synthase gamma chain from Polaromonas naphthalenivorans (strain CJ2).